Consider the following 301-residue polypeptide: Oxaloacetate tautomerase YisK (301 aa).

K99 is a binding site for oxalate. Residues E148, E150, and D179 each contribute to the Mn(2+) site. Oxalate contacts are provided by K196 and T266.

Belongs to the FAH family. Homodimer. Mg(2+) serves as cofactor. The cofactor is Mn(2+).

The protein localises to the cytoplasm. The catalysed reaction is oxaloacetate = enol-oxaloacetate. The enzyme catalyses oxaloacetate + H(+) = pyruvate + CO2. Functionally, tautomerase that converts enol-oxaloacetate to the keto form of oxaloacetate. Also shows weak oxaloacetate decarboxylase (ODx), catalyzing the decarboxylation of oxaloacetate (OAA) to pyruvate and CO(2). The polypeptide is Oxaloacetate tautomerase YisK (Bacillus subtilis (strain 168)).